A 159-amino-acid chain; its full sequence is SsrA-binding protein (159 aa).

The protein belongs to the SmpB family.

Its subcellular location is the cytoplasm. Functionally, required for rescue of stalled ribosomes mediated by trans-translation. Binds to transfer-messenger RNA (tmRNA), required for stable association of tmRNA with ribosomes. tmRNA and SmpB together mimic tRNA shape, replacing the anticodon stem-loop with SmpB. tmRNA is encoded by the ssrA gene; the 2 termini fold to resemble tRNA(Ala) and it encodes a 'tag peptide', a short internal open reading frame. During trans-translation Ala-aminoacylated tmRNA acts like a tRNA, entering the A-site of stalled ribosomes, displacing the stalled mRNA. The ribosome then switches to translate the ORF on the tmRNA; the nascent peptide is terminated with the 'tag peptide' encoded by the tmRNA and targeted for degradation. The ribosome is freed to recommence translation, which seems to be the essential function of trans-translation. This chain is SsrA-binding protein, found in Salinispora tropica (strain ATCC BAA-916 / DSM 44818 / JCM 13857 / NBRC 105044 / CNB-440).